We begin with the raw amino-acid sequence, 452 residues long: Isocitrate dehydrogenase [NADP], mitochondrial (452 aa).

Residues 1–39 (MAGYLRAVSSLCRASGSTRTWAPAALNVPSWPEQPRRHY) constitute a mitochondrion transit peptide. K45, K48, K67, and K69 each carry N6-acetyllysine. K80 and K106 each carry N6-acetyllysine; alternate. An N6-succinyllysine; alternate mark is found at K80 and K106. NADP(+)-binding positions include 115 to 117 (TIT) and R122. Position 117 (T117) interacts with D-threo-isocitrate. D-threo-isocitrate contacts are provided by residues 134 to 140 (SPNGTIR) and R149. K155 carries the N6-acetyllysine modification. At K166 the chain carries N6-acetyllysine; alternate. K166 bears the N6-succinyllysine; alternate mark. A D-threo-isocitrate-binding site is contributed by R172. Residues K180 and K193 each carry the N6-acetyllysine; alternate modification. N6-succinyllysine; alternate is present on residues K180 and K193. K199 is subject to N6-acetyllysine. K256 carries the post-translational modification N6-acetyllysine; alternate. K256 is subject to N6-succinyllysine; alternate. Residues K263, K272, K275, and K280 each carry the N6-acetyllysine modification. K282 carries the post-translational modification N6-acetyllysine; alternate. Residue K282 is modified to N6-succinyllysine; alternate. Residue D291 coordinates Mn(2+). Residue K299 coordinates NADP(+). D314 serves as a coordination point for Mn(2+). NADP(+)-binding positions include 349–354 (GTVTRH) and N367. An N6-acetyllysine; alternate modification is found at K384. Position 384 is an N6-succinyllysine; alternate (K384). N6-acetyllysine is present on residues K400, K413, and K442.

The protein belongs to the isocitrate and isopropylmalate dehydrogenases family. As to quaternary structure, homodimer. Mg(2+) serves as cofactor. Requires Mn(2+) as cofactor. Acetylation at Lys-413 dramatically reduces catalytic activity. Deacetylated by SIRT3.

The protein localises to the mitochondrion. It catalyses the reaction D-threo-isocitrate + NADP(+) = 2-oxoglutarate + CO2 + NADPH. Functionally, plays a role in intermediary metabolism and energy production. It may tightly associate or interact with the pyruvate dehydrogenase complex. The chain is Isocitrate dehydrogenase [NADP], mitochondrial (Idh2) from Rattus norvegicus (Rat).